The following is a 105-amino-acid chain: U-scoloptoxin(16)-Sm4a (105 aa).

The signal sequence occupies residues 1–22; sequence MWALTVFVTILAAAIPITGVTG.

The protein belongs to the scoloptoxin-16 family. Post-translationally, contains 4 disulfide bonds. In terms of tissue distribution, expressed by the venom gland.

The protein resides in the secreted. This chain is U-scoloptoxin(16)-Sm4a, found in Scolopendra morsitans (Tanzanian blue ringleg centipede).